The sequence spans 271 residues: Probable septum site-determining protein MinC (271 aa).

A disordered region spans residues 106-125 (RRAPSPKAADDAPAQPEEPR). A compositionally biased stretch (low complexity) spans 110-119 (SPKAADDAPA).

The protein belongs to the MinC family. As to quaternary structure, interacts with MinD and FtsZ.

Its function is as follows. Cell division inhibitor that blocks the formation of polar Z ring septums. Rapidly oscillates between the poles of the cell to destabilize FtsZ filaments that have formed before they mature into polar Z rings. Prevents FtsZ polymerization. The protein is Probable septum site-determining protein MinC of Burkholderia thailandensis (strain ATCC 700388 / DSM 13276 / CCUG 48851 / CIP 106301 / E264).